The primary structure comprises 479 residues: Isoprimeverose transporter (479 aa).

A run of 11 helical transmembrane segments spans residues 54 to 74 (MFFY…LFLV), 102 to 122 (PYWL…FTVP), 131 to 151 (VWAY…NIPI), 174 to 194 (FMGT…VAYF), 205 to 225 (WFMV…IVFA), 253 to 273 (WPWV…QTRS), 289 to 309 (LASF…ITPW), 321 to 341 (LMGM…SKAL), 348 to 368 (VGTI…AVML), 397 to 417 (FGMG…GYVA), and 431 to 451 (MNYV…LLFY).

It belongs to the sodium:galactoside symporter (TC 2.A.2) family.

The protein localises to the cell membrane. In terms of biological role, involved in the metabolism of isoprimeverose. Transports isoprimeverose into the cell. Transport is driven by the proton motive force generated by malolactic fermentation. Cannot transport D-xylose. The polypeptide is Isoprimeverose transporter (Lactiplantibacillus pentosus (Lactobacillus pentosus)).